The following is a 507-amino-acid chain: Phosphoprotein (507 aa).

The segment covering 31-51 has biased composition (polar residues); the sequence is EVSSLRDQTCNPGQENGTTGM. 3 disordered regions span residues 31-86, 123-172, and 242-307; these read EVSS…CGER, IEDA…GYSF, and GIVA…DSEY. The span at 147–160 shows a compositional bias: acidic residues; sequence SLDDSTEDSGEDYS. Phosphoserine is present on S151. Polar residues-rich tracts occupy residues 246 to 271 and 289 to 300; these read GSTS…SAGN and SGTQLPPRTSNE. The interval 304-376 is multimerization; it reads DSEYDDELFS…LSSIMIAIPG (73 aa). The stretch at 310–339 forms a coiled coil; the sequence is ELFSEIQEIRSAITKLTEDNQAILTKLDTL. The tract at residues 459 to 507 is interaction with the nucleocapsid (N-RNA); sequence PSKAVLASLIRSSRVDQSHKHNMLALLKNIKGDDNLNEFYQMVKSITHA.

The protein belongs to the morbillivirus P protein family. As to quaternary structure, homotetramer. Interacts (via multimerization domain) with polymerase L; this interaction forms the polymerase L-P complex. Interacts (via N-terminus) with N0 (via Ncore); this interaction allows P to chaperon N0 to avoid N polymerization before encapsidation. Interacts (via C-terminus) with N-RNA template; this interaction positions the polymerase on the template for both transcription and replication. Phosphorylation on serines by host CK2 is necessary for the formation of viral factories.

Functionally, essential cofactor of the RNA polymerase L that plays a central role in the transcription and replication by forming the polymerase complex with RNA polymerase L and recruiting L to the genomic N-RNA template for RNA synthesis. Also plays a central role in the encapsidation of nascent RNA chains by forming the encapsidation complex with the nucleocapsid protein N (N-P complex). Acts as a chaperone for newly synthesized free N protein, so-called N0, allowing encapsidation of nascent RNA chains during replication. The nucleoprotein protein N prevents excessive phosphorylation of P, which leads to down-regulation of viral transcription/ replication. Participates, together with N, in the formation of viral factories (viroplasms), which are large inclusions in the host cytoplasm where replication takes place. This chain is Phosphoprotein (P/V), found in Canine distemper virus (strain Onderstepoort) (CDV).